Reading from the N-terminus, the 156-residue chain is Arginine repressor (156 aa).

Belongs to the ArgR family.

The protein resides in the cytoplasm. The protein operates within amino-acid biosynthesis; L-arginine biosynthesis [regulation]. Functionally, regulates arginine biosynthesis genes. This chain is Arginine repressor, found in Shewanella frigidimarina (strain NCIMB 400).